We begin with the raw amino-acid sequence, 730 residues long: UvrABC system protein C (730 aa).

Residues 16–95 (AAPGVYKFRD…IKEFDPRFNV (80 aa)) form the GIY-YIG domain. Positions 208 to 243 (DKLVKDLEKRMQQASEDLDFETAARLRDDIGALRKA) constitute a UVR domain. Residues 678–730 (ARALPAAVGDDELDKESESSVTSADAPSAESGSGDEGSESRELSMPTTGPSAQ) form a disordered region.

Belongs to the UvrC family. In terms of assembly, interacts with UvrB in an incision complex.

The protein resides in the cytoplasm. The UvrABC repair system catalyzes the recognition and processing of DNA lesions. UvrC both incises the 5' and 3' sides of the lesion. The N-terminal half is responsible for the 3' incision and the C-terminal half is responsible for the 5' incision. This is UvrABC system protein C from Rhodococcus erythropolis (strain PR4 / NBRC 100887).